A 579-amino-acid polypeptide reads, in one-letter code: YTH domain-containing family protein 2 (579 aa).

The tract at residues 1–45 (MSASSLLEQRPKGQGNKVQNGSVHQKDGLNDDDFEPYLSPQARPN) is disordered. S2 is subject to N-acetylserine. Phosphoserine is present on residues S2, S4, S5, S22, S39, and S196. The localization to mRNA processing bodies (P-bodies) stretch occupies residues 2-384 (SASSLLEQRP…QAGSGSTPSE (383 aa)). The interval 247 to 387 (AKQQPKLKTK…SGSTPSEPHP (141 aa)) is disordered. Polar residues predominate over residues 291–316 (ALVQNIGQPTQGSPQPVGQQANNSPP). Positions 337-349 (AQLSVQQQAAQPT) are enriched in low complexity. Phosphoserine is present on S359. The segment covering 359-371 (SGFGHNGVDGNGV) has biased composition (gly residues). Over residues 372–383 (GQSQAGSGSTPS) the composition is skewed to polar residues. The interval 385 to 579 (PHPVLEKLRS…VKKERQGRGK (195 aa)) is interaction with m6A-containing mRNAs. S394 carries the post-translational modification Phosphoserine. Positions 410-544 (GRVFIIKSYS…EKAKQVLKII (135 aa)) constitute a YTH domain. Residues 416–418 (KSY), D422, 432–433 (WC), N462, W486, and W491 contribute to the RNA site.

This sequence belongs to the YTHDF family. YTHDF2 subfamily. Interacts with CNOT1; interaction is direct and promotes recruitment of the CCR4-NOT complex. Interacts with YTHDF3. Interacts with RIDA/HRSP12; interaction leads to recruitment of the ribonuclease P/MRP complex. Ubiquitinated by the SCF(SKP2) complex, leading to its degradation. As to expression, widely expressed, with highest expression in testis.

The protein resides in the cytoplasm. It localises to the cytosol. It is found in the P-body. The protein localises to the stress granule. Its subcellular location is the nucleus. In terms of biological role, specifically recognizes and binds N6-methyladenosine (m6A)-containing RNAs, and regulates their stability. M6A is a modification present at internal sites of mRNAs and some non-coding RNAs and plays a role in mRNA stability and processing. Acts as a regulator of mRNA stability by promoting degradation of m6A-containing mRNAs via interaction with the CCR4-NOT and ribonuclease P/MRP complexes, depending on the context. The YTHDF paralogs (YTHDF1, YTHDF2 and YTHDF3) share m6A-containing mRNAs targets and act redundantly to mediate mRNA degradation and cellular differentiation. M6A-containing mRNAs containing a binding site for RIDA/HRSP12 (5'-GGUUC-3') are preferentially degraded by endoribonucleolytic cleavage: cooperative binding of RIDA/HRSP12 and YTHDF2 to transcripts leads to recruitment of the ribonuclease P/MRP complex. Other m6A-containing mRNAs undergo deadenylation via direct interaction between YTHDF2 and CNOT1, leading to recruitment of the CCR4-NOT and subsequent deadenylation of m6A-containing mRNAs. Required maternally to regulate oocyte maturation: probably acts by binding to m6A-containing mRNAs, thereby regulating maternal transcript dosage during oocyte maturation, which is essential for the competence of oocytes to sustain early zygotic development. Also required during spermatogenesis: regulates spermagonial adhesion by promoting degradation of m6A-containing transcripts coding for matrix metallopeptidases. Also involved in hematopoietic stem cells specification by binding to m6A-containing mRNAs, leading to promote their degradation. Also acts as a regulator of neural development by promoting m6A-dependent degradation of neural development-related mRNA targets. Inhibits neural specification of induced pluripotent stem cells by binding to methylated neural-specific mRNAs and promoting their degradation, thereby restraining neural differentiation. Regulates circadian regulation of hepatic lipid metabolism: acts by promoting m6A-dependent degradation of PPARA transcripts. Regulates the innate immune response to infection by inhibiting the type I interferon response: acts by binding to m6A-containing IFNB transcripts and promoting their degradation. May also act as a promoter of cap-independent mRNA translation following heat shock stress: upon stress, relocalizes to the nucleus and specifically binds mRNAs with some m6A methylation mark at their 5'-UTR, protecting demethylation of mRNAs by FTO, thereby promoting cap-independent mRNA translation. Regulates mitotic entry by promoting the phase-specific m6A-dependent degradation of WEE1 transcripts. Promotes formation of phase-separated membraneless compartments, such as P-bodies or stress granules, by undergoing liquid-liquid phase separation upon binding to mRNAs containing multiple m6A-modified residues: polymethylated mRNAs act as a multivalent scaffold for the binding of YTHDF proteins, juxtaposing their disordered regions and thereby leading to phase separation. The resulting mRNA-YTHDF complexes then partition into different endogenous phase-separated membraneless compartments, such as P-bodies, stress granules or neuronal RNA granules. May also recognize and bind RNAs modified by C5-methylcytosine (m5C) and act as a regulator of rRNA processing. This chain is YTH domain-containing family protein 2, found in Mus musculus (Mouse).